The chain runs to 502 residues: Glycerol kinase (502 aa).

ADP is bound at residue Thr14. Residues Thr14, Thr15, and Ser16 each coordinate ATP. Position 14 (Thr14) interacts with sn-glycerol 3-phosphate. Arg18 lines the ADP pocket. Sn-glycerol 3-phosphate-binding residues include Arg84, Glu85, and Tyr136. Arg84, Glu85, and Tyr136 together coordinate glycerol. His232 is modified (phosphohistidine; by HPr). Sn-glycerol 3-phosphate is bound at residue Asp246. Glycerol-binding residues include Asp246 and Gln247. Residues Thr268 and Gly311 each coordinate ADP. Residues Thr268, Gly311, Gln315, and Gly412 each contribute to the ATP site. ADP is bound by residues Gly412 and Asn416.

It belongs to the FGGY kinase family. As to quaternary structure, homotetramer and homodimer (in equilibrium). The phosphoenolpyruvate-dependent sugar phosphotransferase system (PTS), including enzyme I, and histidine-containing protein (HPr) are required for the phosphorylation, which leads to the activation of the enzyme.

The enzyme catalyses glycerol + ATP = sn-glycerol 3-phosphate + ADP + H(+). Its pathway is polyol metabolism; glycerol degradation via glycerol kinase pathway; sn-glycerol 3-phosphate from glycerol: step 1/1. Its activity is regulated as follows. Activated by phosphorylation and inhibited by fructose 1,6-bisphosphate (FBP). Functionally, key enzyme in the regulation of glycerol uptake and metabolism. Catalyzes the phosphorylation of glycerol to yield sn-glycerol 3-phosphate. In Streptococcus sanguinis (strain SK36), this protein is Glycerol kinase.